A 510-amino-acid polypeptide reads, in one-letter code: 2,3-bisphosphoglycerate-independent phosphoglycerate mutase (510 aa).

Mn(2+) contacts are provided by Asp-13 and Ser-63. Residue Ser-63 is the Phosphoserine intermediate of the active site. Substrate-binding positions include His-124, Arg-154–Asp-155, Arg-186, Arg-192, Arg-262–Arg-265, and Lys-334. The Mn(2+) site is built by Asp-401, His-405, Asp-442, His-443, and His-461.

The protein belongs to the BPG-independent phosphoglycerate mutase family. In terms of assembly, monomer. Mn(2+) serves as cofactor.

The enzyme catalyses (2R)-2-phosphoglycerate = (2R)-3-phosphoglycerate. The protein operates within carbohydrate degradation; glycolysis; pyruvate from D-glyceraldehyde 3-phosphate: step 3/5. Catalyzes the interconversion of 2-phosphoglycerate and 3-phosphoglycerate. In Vibrio campbellii (strain ATCC BAA-1116), this protein is 2,3-bisphosphoglycerate-independent phosphoglycerate mutase.